A 120-amino-acid polypeptide reads, in one-letter code: Holo-[acyl-carrier-protein] synthase (120 aa).

Positions 8 and 58 each coordinate Mg(2+).

It belongs to the P-Pant transferase superfamily. AcpS family. Mg(2+) serves as cofactor.

It is found in the cytoplasm. It carries out the reaction apo-[ACP] + CoA = holo-[ACP] + adenosine 3',5'-bisphosphate + H(+). In terms of biological role, transfers the 4'-phosphopantetheine moiety from coenzyme A to a Ser of acyl-carrier-protein. This is Holo-[acyl-carrier-protein] synthase from Anoxybacillus flavithermus (strain DSM 21510 / WK1).